Reading from the N-terminus, the 286-residue chain is Alpha-ketoglutarate-dependent dioxygenase alkB homolog 3 (286 aa).

The disordered stretch occupies residues 1–38 (MEDKRRRARVQGAWAGPAKSQATAQPAPTAENNLQQRP). The segment covering 20–36 (SQATAQPAPTAENNLQQ) has biased composition (polar residues). Substrate contacts are provided by residues Trp115 and 141 to 143 (YTY). Residues 172 to 278 (SFNSLLCNLY…RINLTFRTVY (107 aa)) form the Fe2OG dioxygenase domain. Leu177 bears the (4R)-5-hydroxyleucine; alternate mark. The residue at position 177 (Leu177) is a (4R)-5-oxoleucine; alternate. Residue 179–181 (NLY) coordinates 2-oxoglutarate. Fe cation contacts are provided by His191 and Asp193. A substrate-binding site is contributed by Asp194. Position 257 (His257) interacts with Fe cation. 2-oxoglutarate contacts are provided by residues 269–275 (RINLTFR) and Arg275.

Belongs to the alkB family. In terms of assembly, interacts with the ASCC complex composed of ASCC1, ASCC2 and ASCC3. Interacts directly with ASCC3, and is thereby recruited to the ASCC complex. Interacts with OTUD4; the interaction is direct. Interacts with USP7 and USP9X. The cofactor is Fe(2+). In terms of processing, ubiquitinated; undergoes 'Lys-48'-linked polyubiquitination. OTUD4 promotes USP7 and USP9X-dependent deubiquitination of 'Lys-48'-polyubiquitinated ALKBH3 promoting the repair of alkylated DNA lesions.

It is found in the nucleus. It localises to the cytoplasm. The catalysed reaction is an N(1)-methyladenosine in mRNA + 2-oxoglutarate + O2 = an adenosine in mRNA + formaldehyde + succinate + CO2. It catalyses the reaction a methylated nucleobase within DNA + 2-oxoglutarate + O2 = a nucleobase within DNA + formaldehyde + succinate + CO2. The enzyme catalyses an N(1)-methyl-2'-deoxyadenosine in single-stranded DNA + 2-oxoglutarate + O2 = a 2'-deoxyadenosine in single-stranded DNA + formaldehyde + succinate + CO2 + H(+). It carries out the reaction an N(3)-methyl-2'-deoxycytidine in single-stranded DNA + 2-oxoglutarate + O2 = a 2'-deoxycytidine in single-stranded DNA + formaldehyde + succinate + CO2 + H(+). The catalysed reaction is a 3,N(4)-etheno-2'-deoxycytidine in single-stranded DNA + 2-oxoglutarate + O2 + H2O = a 2'-deoxycytidine in single-stranded DNA + glyoxal + succinate + CO2. Its activity is regulated as follows. Activated by ascorbate. Its function is as follows. Dioxygenase that mediates demethylation of DNA and RNA containing 1-methyladenosine (m1A). Repairs alkylated DNA containing 1-methyladenosine (m1A) and 3-methylcytosine (m3C) by oxidative demethylation. Has a strong preference for single-stranded DNA. Able to process alkylated m3C within double-stranded regions via its interaction with ASCC3, which promotes DNA unwinding to generate single-stranded substrate needed for ALKBH3. Can repair exocyclic 3,N4-ethenocytosine adducs in single-stranded DNA. Also acts on RNA. Demethylates N(1)-methyladenosine (m1A) RNA, an epigenetic internal modification of messenger RNAs (mRNAs) highly enriched within 5'-untranslated regions (UTRs) and in the vicinity of start codons. Requires molecular oxygen, alpha-ketoglutarate and iron. The sequence is that of Alpha-ketoglutarate-dependent dioxygenase alkB homolog 3 from Bos taurus (Bovine).